A 438-amino-acid chain; its full sequence is RING finger protein 150 (438 aa).

The N-terminal stretch at 1-34 is a signal peptide; that stretch reads MAMSLIQACCSLALSTWLLSFCFVHLLCLDFTVA. Over 35–208 the chain is Extracellular; it reads EKEEWYTAFV…NLQKYVSRTS (174 aa). N-linked (GlcNAc...) asparagine glycans are attached at residues Asn45, Asn125, Asn153, and Asn186. The region spanning 81 to 183 is the PA domain; sequence SPKQDARGEV…PKGKEIVSLL (103 aa). The chain crosses the membrane as a helical span at residues 209–229; the sequence is VVFVSISFIVLMIISLAWLVF. Over 230–438 the chain is Cytoplasmic; the sequence is YYIQRFRYAN…TDQDCEEVKS (209 aa). The RING-type; atypical zinc finger occupies 278-319; the sequence is CAVCIEGYKPNDVVRILPCRHLFHKSCVDPWLLDHRTCPMCK.

The protein resides in the membrane. This chain is RING finger protein 150 (RNF150), found in Homo sapiens (Human).